We begin with the raw amino-acid sequence, 101 residues long: Large ribosomal subunit protein uL23 (101 aa).

It belongs to the universal ribosomal protein uL23 family. Part of the 50S ribosomal subunit. Contacts protein L29, and trigger factor when it is bound to the ribosome.

One of the early assembly proteins it binds 23S rRNA. One of the proteins that surrounds the polypeptide exit tunnel on the outside of the ribosome. Forms the main docking site for trigger factor binding to the ribosome. The polypeptide is Large ribosomal subunit protein uL23 (Rhodococcus jostii (strain RHA1)).